The sequence spans 575 residues: 2-isopropylmalate synthase (575 aa).

The region spanning 40 to 314 is the Pyruvate carboxyltransferase domain; the sequence is PRWCAVDLRD…DPQIDFSDID (275 aa). 4 residues coordinate Mg(2+): D49, H253, H255, and N289. The segment at 456-575 is regulatory domain; the sequence is SGSGTPEWGR…IVSAVNRALR (120 aa).

It belongs to the alpha-IPM synthase/homocitrate synthase family. LeuA type 2 subfamily. As to quaternary structure, homodimer. It depends on Mg(2+) as a cofactor.

It is found in the cytoplasm. It catalyses the reaction 3-methyl-2-oxobutanoate + acetyl-CoA + H2O = (2S)-2-isopropylmalate + CoA + H(+). Its pathway is amino-acid biosynthesis; L-leucine biosynthesis; L-leucine from 3-methyl-2-oxobutanoate: step 1/4. In terms of biological role, catalyzes the condensation of the acetyl group of acetyl-CoA with 3-methyl-2-oxobutanoate (2-ketoisovalerate) to form 3-carboxy-3-hydroxy-4-methylpentanoate (2-isopropylmalate). The chain is 2-isopropylmalate synthase from Kineococcus radiotolerans (strain ATCC BAA-149 / DSM 14245 / SRS30216).